The primary structure comprises 269 residues: RBPJ-interacting and tubulin-associated protein 1 (269 aa).

Residues 5 to 17 carry the Nuclear export signal motif; it reads VELAVSGIQTLPL. Disordered regions lie at residues 37–101 and 141–269; these read SLFG…NKYR and FWTP…PPWK. Positions 62 to 77 are enriched in polar residues; it reads RTSGVGTGTSRASGAN. Residues 79-93 show a composition bias toward low complexity; the sequence is SCETTSSSGSTPTLT. Positions 92-108 match the Nuclear localization signal motif; that stretch reads LTPRKKNKYRLISHTPS. Positions 128–156 are interaction with RBPJ/RBPSUH; it reads WMAKGDAAKLHSLFWTPPATPRGSHSPRP. Positions 156 to 269 are interaction with tubulin; that stretch reads PRETPLRAIH…ATQKPKPPWK (114 aa).

The protein belongs to the RITA family. In terms of assembly, interacts with RBPJ/RBPSUH.

Its subcellular location is the cytoplasm. It is found in the nucleus. The protein localises to the cytoskeleton. The protein resides in the microtubule organizing center. It localises to the centrosome. In terms of biological role, tubulin-binding protein that acts as a negative regulator of Notch signaling pathway. Shuttles between the cytoplasm and the nucleus and mediates the nuclear export of RBPJ/RBPSUH, thereby preventing the interaction between RBPJ/RBPSUH and NICD product of Notch proteins (Notch intracellular domain), leading to down-regulate Notch-mediated transcription. May play a role in neurogenesis. The polypeptide is RBPJ-interacting and tubulin-associated protein 1 (RITA1) (Ailuropoda melanoleuca (Giant panda)).